A 147-amino-acid chain; its full sequence is Protein phosphatase 1 regulatory subunit 14B (147 aa).

Residues 1–55 are disordered; the sequence is MADSGTAGGAALAAPAPGPGSGGPGPRVYFQSPPGAAGEGPGGADDEGPVRRQGK. Alanine 2 is modified (N-acetylalanine). A Phosphoserine modification is found at serine 21. Position 29 is a phosphotyrosine (tyrosine 29). Serine 32 carries the post-translational modification Phosphoserine. Position 57 is a phosphothreonine (threonine 57). A coiled-coil region spans residues 61–103; it reads DRKELRKRLNLEEWILEQLTRLYDCQEEEIPELEIDVDELLDM.

It belongs to the PP1 inhibitor family. Post-translationally, phosphorylated primarily on Thr-57 by PKC (in vitro). An unknown Ser is also phosphorylated by PKC (in vitro). Ubiquitous. Expressed at low levels.

It localises to the cytoplasm. In terms of biological role, inhibitor of PPP1CA. Has over 50-fold higher inhibitory activity when phosphorylated. This is Protein phosphatase 1 regulatory subunit 14B (PPP1R14B) from Homo sapiens (Human).